A 315-amino-acid polypeptide reads, in one-letter code: Tyrosine recombinase XerC (315 aa).

The region spanning Ala-13–Glu-104 is the Core-binding (CB) domain. Residues Ser-125–Asp-309 enclose the Tyr recombinase domain. Catalysis depends on residues Arg-168, Lys-193, His-261, Arg-264, and His-287. The active-site O-(3'-phospho-DNA)-tyrosine intermediate is the Tyr-296.

It belongs to the 'phage' integrase family. XerC subfamily. Forms a cyclic heterotetrameric complex composed of two molecules of XerC and two molecules of XerD.

It is found in the cytoplasm. Its function is as follows. Site-specific tyrosine recombinase, which acts by catalyzing the cutting and rejoining of the recombining DNA molecules. The XerC-XerD complex is essential to convert dimers of the bacterial chromosome into monomers to permit their segregation at cell division. It also contributes to the segregational stability of plasmids. In Brucella suis biovar 1 (strain 1330), this protein is Tyrosine recombinase XerC.